The following is a 154-amino-acid chain: Protein X (154 aa).

The mitochondrial targeting sequence stretch occupies residues 68-117 (PCALRFTSARRMETTVNAHWNLPKVLHKRTLGLSAMSTTDLEAYFKDCVF).

The protein belongs to the orthohepadnavirus protein X family. As to quaternary structure, may form homodimer. May interact with host CEBPA, CFLAR, CREB1, DDB1, E4F1, HBXIP, HSPD1/HSP60, NFKBIA, POLR2E and SMAD4. Interacts with host SMC5-SMC6 complex and induces its degradation. Interacts with host TRPC4AP; leading to prevent ubiquitination of TRPC4AP. Interacts with host PLSCR1; this interaction promotes ubiquitination and degradation of HBx and impairs HBx-mediated cell proliferation. Post-translationally, a fraction may be phosphorylated in insect cells and HepG2 cells, a human hepatoblastoma cell line. Phosphorylated in vitro by host protein kinase C or mitogen-activated protein kinase. N-acetylated in insect cells.

It is found in the host cytoplasm. It localises to the host nucleus. The protein localises to the host mitochondrion. Multifunctional protein that plays a role in silencing host antiviral defenses and promoting viral transcription. Does not seem to be essential for HBV infection. May be directly involved in development of cirrhosis and liver cancer (hepatocellular carcinoma). Most of cytosolic activities involve modulation of cytosolic calcium. The effect on apoptosis is controversial depending on the cell types in which the studies have been conducted. May induce apoptosis by localizing in mitochondria and causing loss of mitochondrial membrane potential. May also modulate apoptosis by binding host CFLAR, a key regulator of the death-inducing signaling complex (DISC). Promotes viral transcription by using the host E3 ubiquitin ligase DDB1 to target the SMC5-SMC6 complex to proteasomal degradation. This host complex would otherwise bind to viral episomal DNA, and prevents its transcription. Moderately stimulates transcription of many different viral and cellular transcription elements. Promoters and enhancers stimulated by HBx contain DNA binding sites for NF-kappa-B, AP-1, AP-2, c-EBP, ATF/CREB, or the calcium-activated factor NF-AT. In Hepatitis B virus genotype B2 (isolate Vietnam/9873/1997) (HBV-B), this protein is Protein X.